The following is a 317-amino-acid chain: Aspartate carbamoyltransferase catalytic subunit (317 aa).

Residues Arg65 and Thr66 each contribute to the carbamoyl phosphate site. Lys93 lines the L-aspartate pocket. The carbamoyl phosphate site is built by Arg115, His145, and Gln148. Arg178 and Arg233 together coordinate L-aspartate. Residues Gly274 and Pro275 each contribute to the carbamoyl phosphate site.

The protein belongs to the aspartate/ornithine carbamoyltransferase superfamily. ATCase family. Heterododecamer (2C3:3R2) of six catalytic PyrB chains organized as two trimers (C3), and six regulatory PyrI chains organized as three dimers (R2).

The enzyme catalyses carbamoyl phosphate + L-aspartate = N-carbamoyl-L-aspartate + phosphate + H(+). Its pathway is pyrimidine metabolism; UMP biosynthesis via de novo pathway; (S)-dihydroorotate from bicarbonate: step 2/3. Its function is as follows. Catalyzes the condensation of carbamoyl phosphate and aspartate to form carbamoyl aspartate and inorganic phosphate, the committed step in the de novo pyrimidine nucleotide biosynthesis pathway. The sequence is that of Aspartate carbamoyltransferase catalytic subunit from Bordetella parapertussis (strain 12822 / ATCC BAA-587 / NCTC 13253).